A 218-amino-acid polypeptide reads, in one-letter code: 3-oxo-tetronate 4-phosphate decarboxylase (218 aa).

The active-site Proton acceptor is E86. Zn(2+) is bound by residues E86, H105, and H107. Residue Y132 is the Proton donor of the active site. H172 provides a ligand contact to Zn(2+).

This sequence belongs to the aldolase class II family. AraD/FucA subfamily. Zn(2+) serves as cofactor.

It carries out the reaction 3-dehydro-4-O-phospho-D-erythronate + H(+) = dihydroxyacetone phosphate + CO2. The enzyme catalyses 3-dehydro-4-O-phospho-L-erythronate + H(+) = dihydroxyacetone phosphate + CO2. Its function is as follows. Catalyzes the decarboxylation of 3-oxo-tetronate 4-phosphate to dihydroxyacetone phosphate (DHAP) and CO(2). The polypeptide is 3-oxo-tetronate 4-phosphate decarboxylase (Pectobacterium atrosepticum (strain SCRI 1043 / ATCC BAA-672) (Erwinia carotovora subsp. atroseptica)).